Consider the following 303-residue polypeptide: tRNA pseudouridine synthase B (303 aa).

The Nucleophile role is filled by Asp-38.

Belongs to the pseudouridine synthase TruB family. Type 1 subfamily.

The catalysed reaction is uridine(55) in tRNA = pseudouridine(55) in tRNA. Its function is as follows. Responsible for synthesis of pseudouridine from uracil-55 in the psi GC loop of transfer RNAs. In Oceanobacillus iheyensis (strain DSM 14371 / CIP 107618 / JCM 11309 / KCTC 3954 / HTE831), this protein is tRNA pseudouridine synthase B.